We begin with the raw amino-acid sequence, 602 residues long: UvrABC system protein C (602 aa).

Positions 17-94 constitute a GIY-YIG domain; the sequence is TTSGCYKMYS…IKEYKPDYNI (78 aa). Positions 199–234 constitute a UVR domain; it reads SKLLDETEIKMKEAIKKEDFEAAIKLKETKRSLIEI.

Belongs to the UvrC family. As to quaternary structure, interacts with UvrB in an incision complex.

Its subcellular location is the cytoplasm. The UvrABC repair system catalyzes the recognition and processing of DNA lesions. UvrC both incises the 5' and 3' sides of the lesion. The N-terminal half is responsible for the 3' incision and the C-terminal half is responsible for the 5' incision. In Borrelia hermsii (strain HS1 / DAH), this protein is UvrABC system protein C.